The sequence spans 300 residues: MKQIVIASRESKLALWQTNYVKDRIQQELNIRCQINTMKTQGDIILDKPLNKIGGKALFMKELEIAMLNNKADIAVHSLKDVPYQLPQGFCLSSFMPREDPRDAFVSNKYSSIDDLPRGAIVGTSSLRRKAQLLHYRYDLEIRDLRGNVQTRLSKLDNGDYDAIILASAGLIRLELNERITQFIPVEISLPAVGQGIVVIEALDKSSEILQKLQKLNCSDSFCVATAERAFNQELKGGCHVAIGAYAELHDNQITLTAMVASSDGKNILKRKLTGDDPMRLGKLLAQEMIELGAYKILEK.

S-(dipyrrolylmethanemethyl)cysteine is present on Cys239.

This sequence belongs to the HMBS family. In terms of assembly, monomer. It depends on dipyrromethane as a cofactor.

The catalysed reaction is 4 porphobilinogen + H2O = hydroxymethylbilane + 4 NH4(+). Its pathway is porphyrin-containing compound metabolism; protoporphyrin-IX biosynthesis; coproporphyrinogen-III from 5-aminolevulinate: step 2/4. Functionally, tetrapolymerization of the monopyrrole PBG into the hydroxymethylbilane pre-uroporphyrinogen in several discrete steps. The sequence is that of Porphobilinogen deaminase from Francisella philomiragia subsp. philomiragia (strain ATCC 25017 / CCUG 19701 / FSC 153 / O#319-036).